The chain runs to 299 residues: Probable lipid kinase YegS (299 aa).

The DAGKc domain maps to 2 to 133 (ANFPASLLIL…IDMAMVNDKT (132 aa)). Residues T40, 66 to 72 (GDGTINE), and T95 contribute to the ATP site. 3 residues coordinate Mg(2+): L215, D218, and L220. E271 (proton acceptor) is an active-site residue.

The protein belongs to the diacylglycerol/lipid kinase family. YegS lipid kinase subfamily. Requires Mg(2+) as cofactor. Ca(2+) serves as cofactor.

It is found in the cytoplasm. Its function is as follows. Probably phosphorylates lipids; the in vivo substrate is unknown. The sequence is that of Probable lipid kinase YegS from Salmonella choleraesuis (strain SC-B67).